The primary structure comprises 278 residues: Probable esterase TOX9 (278 aa).

Residues S119, D222, and H250 each act as charge relay system in the active site.

It belongs to the LovG family.

It functions in the pathway mycotoxin biosynthesis. Its function is as follows. Probable esterase; part of the Tox1A locus, one of the 2 loci that mediate the biosynthesis of T-toxin, a family of linear polyketides 37 to 45 carbons in length, of which the major component is 41 carbons, and which leads to high virulence to maize. One of the PKSs (PKS1 or PKS2) could synthesize a precursor, used subsequently by the other PKS as starter unit, to add additional carbons. Variability in the length of the final carbon backbone C35-47 could be achieved by varying the number of condensation cycles, or use of different starter or extender units or might be due to decarboxylation of the penultimate product, catalyzed by DEC1. Additional proteins are required for the biosynthesis of T-toxin, including oxidoreductases RED1, RED2, RED3, LAM1 and OXI1, as well as esterase TOX9. In Cochliobolus heterostrophus (strain C4 / ATCC 48331 / race T) (Southern corn leaf blight fungus), this protein is Probable esterase TOX9.